Here is a 65-residue protein sequence, read N- to C-terminus: Putative antitoxin VapB7 (65 aa).

This sequence belongs to the UPF0165 family.

Possibly the antitoxin component of a type II toxin-antitoxin (TA) system. Its cognate toxin is VapC7 (Potential). The chain is Putative antitoxin VapB7 (vapB7) from Archaeoglobus fulgidus (strain ATCC 49558 / DSM 4304 / JCM 9628 / NBRC 100126 / VC-16).